Consider the following 198-residue polypeptide: MPPPTASTPDDSADPGPDFADVPPTDLVKVGFIFRPHGLDGELKIDPSATDDPARFEVLPTVFVGPHPRRVVRHDIASVRYQKTKRGITVILGLDGIVDRDDAEAVAKMDVFATEAALGLEDDELFADDLVGWTVVTEEGAVQGTVADFMEMPAQDLFVVRTPEDTEAMIPAIDDFIIEIDEEAERIVVRPIDGLMDA.

A disordered region spans residues 1-21 (MPPPTASTPDDSADPGPDFAD). The 74-residue stretch at 122 to 195 (DDELFADDLV…RIVVRPIDGL (74 aa)) folds into the PRC barrel domain.

Belongs to the RimM family. Binds ribosomal protein uS19.

It is found in the cytoplasm. An accessory protein needed during the final step in the assembly of 30S ribosomal subunit, possibly for assembly of the head region. Essential for efficient processing of 16S rRNA. May be needed both before and after RbfA during the maturation of 16S rRNA. It has affinity for free ribosomal 30S subunits but not for 70S ribosomes. In Salinibacter ruber (strain DSM 13855 / M31), this protein is Ribosome maturation factor RimM.